We begin with the raw amino-acid sequence, 51 residues long: Large ribosomal subunit protein bL33 (51 aa).

The protein belongs to the bacterial ribosomal protein bL33 family.

The polypeptide is Large ribosomal subunit protein bL33 (Hahella chejuensis (strain KCTC 2396)).